A 155-amino-acid chain; its full sequence is Troponin C, isoform 2 (155 aa).

EF-hand domains lie at 11 to 46 (EQIA…MGQP), 47 to 82 (FDRQ…FIVE), 87 to 122 (AMQK…LDDQ), and 123 to 155 (LTEQ…MTGE). Positions 60, 62, 64, 66, and 71 each coordinate Ca(2+). Ca(2+) contacts are provided by aspartate 136, aspartate 138, serine 140, threonine 142, and glutamate 147.

The protein belongs to the troponin C family. As to expression, accumulates almost exclusively in larval muscles.

This chain is Troponin C, isoform 2 (TpnC47D), found in Drosophila melanogaster (Fruit fly).